The primary structure comprises 910 residues: Protein translocase subunit SecA (910 aa).

ATP contacts are provided by residues Gln87, 105-109 (GEGKT), and Asp508. Basic and acidic residues predominate over residues 558-568 (RHESRRIDNQL). 2 disordered regions span residues 558 to 580 (RHES…DPGS) and 873 to 910 (AAQQ…GQLS). The Zn(2+) site is built by Cys894, Cys896, Cys905, and His906. Positions 900 to 910 (KKYKHCHGQLS) are enriched in basic residues.

It belongs to the SecA family. As to quaternary structure, monomer and homodimer. Part of the essential Sec protein translocation apparatus which comprises SecA, SecYEG and auxiliary proteins SecDF-YajC and YidC. It depends on Zn(2+) as a cofactor.

Its subcellular location is the cell inner membrane. The protein resides in the cytoplasm. The enzyme catalyses ATP + H2O + cellular proteinSide 1 = ADP + phosphate + cellular proteinSide 2.. Part of the Sec protein translocase complex. Interacts with the SecYEG preprotein conducting channel. Has a central role in coupling the hydrolysis of ATP to the transfer of proteins into and across the cell membrane, serving both as a receptor for the preprotein-SecB complex and as an ATP-driven molecular motor driving the stepwise translocation of polypeptide chains across the membrane. The protein is Protein translocase subunit SecA of Stenotrophomonas maltophilia (strain R551-3).